A 304-amino-acid chain; its full sequence is Calcium release-activated calcium channel protein 1 (304 aa).

Residues Met1–Asn11 are compositionally biased toward pro residues. The tract at residues Met1–Pro49 is disordered. The Cytoplasmic segment spans residues Met1–Lys88. Residues Pro3–Pro49 form a required for generation of inwardly rectifying CRAC currents region. The span at Ser12 to Ser27 shows a compositional bias: low complexity. The AKAP5 association region stretch occupies residues Pro39 to Ser60. An interaction with STIM1 region spans residues Ser71–Ser91. A helical transmembrane segment spans residues Ala89–Val106. Topologically, residues Glu107–Leu120 are extracellular. Residues Leu121 to Ile141 form a helical membrane-spanning segment. The Cytoplasmic segment spans residues Ser142–Glu174. A helical membrane pass occupies residues Leu175–Leu195. Topologically, residues Cys196–Ala237 are extracellular. An N-linked (GlcNAc...) asparagine glycan is attached at Asn225. A helical transmembrane segment spans residues Ala238 to Val258. Over His259–Ala304 the chain is Cytoplasmic. Residues Glu275–His295 are interaction with STIM1. Thr298 bears the Phosphothreonine mark.

The protein belongs to the Orai family. Oligomerizes in homomeric and heteromeric ORAI complexes. Native CRAC channels most likely consist of hexameric ORAI heteromers, implying that diverse ORAI1, ORAI2 and ORAI3 subunit combinations with distinct biophysical properties can operate in a cell-type specific way. ARC channels are heteropentamers consisting of three ORAI1 and two ORAI3 subunits. Interacts with STIM1 and STIM2; this regulates channel activity. Interacts with CALM; this may displace STIM1 and STIM2 and might thereby modulate channel activity. Interacts (via N-terminus) with AKAP5 upon store depletion. Interacts with CRACR2A/EFCAB4B; the interaction is direct and takes place in absence of Ca(2+). Forms a complex with CRACR2A/EFCAB4B and STIM1 at low concentration of Ca(2+), the complex dissociates at elevated Ca(2+) concentrations. Interacts with ASPH (isoform 8). Interacts with SLC35G1. Interacts with UBQLN1. Interacts with ADCY8; interaction is calcium store depletion independent; interaction occurs in membrane raft; interaction increases markedly after store depletion; positively regulates SOCE-induced adenylate cyclase activity; contributes to the targeting of ADCY8 to discrete regions of the plasma membrane that are shielded from other calcium events. Interacts with EFHB; the interaction takes place upon Ca(2+)-store depletion. Interacts (via N- and C-termini) with ATP2C2 (via N-terminus); this interaction regulates Ca(2+) influx at the plasma membrane. Interacts with TSPAN18; this interaction regulates ORAI1 exit from the endoplasmic (ER), and/or Golgi, and trafficking to the cell surface. N-glycosylated. N-glycosylation inhibits channel activity in T cells. Post-translationally, ubiquitinated. In terms of processing, cys-195 is oxidated, leading to inactivation of channel activity.

It is found in the cell membrane. The protein resides in the basolateral cell membrane. The catalysed reaction is Ca(2+)(in) = Ca(2+)(out). Oxidation at Cys-196 leads to inactivation of channel activity. Functionally, pore-forming subunit of two major inward rectifying Ca(2+) channels at the plasma membrane: Ca(2+) release-activated Ca(2+) (CRAC) channels and arachidonate-regulated Ca(2+)-selective (ARC) channels. Assembles with ORAI2 and ORAI3 to form hexameric CRAC channels that mediate Ca(2+) influx upon depletion of endoplasmic reticulum Ca(2+) store and channel activation by Ca(2+) sensor STIM1, a process known as store-operated Ca(2+) entry (SOCE). Various pore subunit combinations may account for distinct CRAC channel spatiotemporal and cell-type specific dynamics. ORAI1 mainly contributes to the generation of Ca(2+) plateaus involved in sustained Ca(2+) entry and is dispensable for cytosolic Ca(2+) oscillations, whereas ORAI2 and ORAI3 generate oscillatory patterns. CRAC channels assemble in Ca(2+) signaling microdomains where Ca(2+) influx is coupled to calmodulin and calcineurin signaling and activation of NFAT transcription factors recruited to ORAI1 via AKAP5. Activates NFATC2/NFAT1 and NFATC3/NFAT4-mediated transcriptional responses. CRAC channels are the main pathway for Ca(2+) influx in T cells and promote the immune response to pathogens by activating NFAT-dependent cytokine and chemokine transcription. Assembles with ORAI3 to form channels that mediate store-independent Ca(2+) influx in response to inflammatory metabolites arachidonate or its derivative leukotriene C4, termed ARC and LRC channels respectively. Plays a prominent role in Ca(2+) influx at the basolateral membrane of mammary epithelial cells independently of the Ca(2+) content of endoplasmic reticulum or Golgi stores. May mediate transepithelial transport of large quantities of Ca(2+) for milk secretion. The sequence is that of Calcium release-activated calcium channel protein 1 (Orai1) from Rattus norvegicus (Rat).